The primary structure comprises 235 residues: Hydroxyacylglutathione hydrolase (235 aa).

The Zn(2+) site is built by His-53, His-55, Asp-57, His-58, His-109, Asp-127, and His-165.

It belongs to the metallo-beta-lactamase superfamily. Glyoxalase II family. Monomer. The cofactor is Zn(2+).

The catalysed reaction is an S-(2-hydroxyacyl)glutathione + H2O = a 2-hydroxy carboxylate + glutathione + H(+). The protein operates within secondary metabolite metabolism; methylglyoxal degradation; (R)-lactate from methylglyoxal: step 2/2. Functionally, thiolesterase that catalyzes the hydrolysis of S-D-lactoyl-glutathione to form glutathione and D-lactic acid. The polypeptide is Hydroxyacylglutathione hydrolase (Haemophilus ducreyi (strain 35000HP / ATCC 700724)).